The sequence spans 59 residues: Temperature acclimation protein A (59 aa).

A CSD domain is found at 1–55 (FNDEKGFGFITPESGPDLFVHFRAIQGNGFKSLKEGQKVTFIAVQGQKGMQADKV).

The protein resides in the cytoplasm. Functionally, affects cell viability at low temperatures. The protein is Temperature acclimation protein A (tapA) of Pseudomonas fragi.